Reading from the N-terminus, the 615-residue chain is Elongation factor 4 (615 aa).

The 183-residue stretch at A14–V196 folds into the tr-type G domain. GTP contacts are provided by residues D26–T31 and N143–D146.

Belongs to the TRAFAC class translation factor GTPase superfamily. Classic translation factor GTPase family. LepA subfamily.

The protein localises to the cell membrane. The enzyme catalyses GTP + H2O = GDP + phosphate + H(+). Functionally, required for accurate and efficient protein synthesis under certain stress conditions. May act as a fidelity factor of the translation reaction, by catalyzing a one-codon backward translocation of tRNAs on improperly translocated ribosomes. Back-translocation proceeds from a post-translocation (POST) complex to a pre-translocation (PRE) complex, thus giving elongation factor G a second chance to translocate the tRNAs correctly. Binds to ribosomes in a GTP-dependent manner. The protein is Elongation factor 4 of Frankia alni (strain DSM 45986 / CECT 9034 / ACN14a).